The chain runs to 703 residues: Epidermal growth factor receptor (703 aa).

The signal sequence occupies residues 1 to 30; it reads MGVRSPLSASGPRGAAVLVLLLLGVALCSA. The Extracellular portion of the chain corresponds to 31 to 654; the sequence is VEEKKVCQGT…GCPNGSKTPS (624 aa). Cysteines 37 and 64 form a disulfide. Residues asparagine 134, asparagine 190, and asparagine 200 are each glycosylated (N-linked (GlcNAc...) asparagine). 13 cysteine pairs are disulfide-bonded: cysteine 164–cysteine 194, cysteine 197–cysteine 206, cysteine 201–cysteine 214, cysteine 222–cysteine 230, cysteine 226–cysteine 238, cysteine 239–cysteine 247, cysteine 243–cysteine 255, cysteine 258–cysteine 267, cysteine 271–cysteine 298, cysteine 302–cysteine 314, cysteine 318–cysteine 333, cysteine 336–cysteine 340, and cysteine 344–cysteine 369. N-linked (GlcNAc...) asparagine glycosylation is found at asparagine 359, asparagine 368, and asparagine 420. Intrachain disulfides connect cysteine 477–cysteine 506, cysteine 513–cysteine 522, cysteine 517–cysteine 530, cysteine 533–cysteine 542, cysteine 546–cysteine 562, cysteine 565–cysteine 581, cysteine 569–cysteine 589, cysteine 592–cysteine 601, cysteine 605–cysteine 627, cysteine 630–cysteine 638, and cysteine 634–cysteine 646. Residues asparagine 573 and asparagine 578 are each glycosylated (N-linked (GlcNAc...) asparagine). N-linked (GlcNAc...) asparagine glycans are attached at residues asparagine 613 and asparagine 633. Residue asparagine 648 is glycosylated (N-linked (GlcNAc...) asparagine). Residues 655-667 traverse the membrane as a helical segment; sequence IAAGVVGGLLCLV. The Cytoplasmic portion of the chain corresponds to 668 to 703; the sequence is VVGLGIGLYLRRRHIVRKRTLRRLLQERELVEPLTP. Phosphothreonine occurs at positions 687 and 702.

This sequence belongs to the protein kinase superfamily. Tyr protein kinase family. EGF receptor subfamily. As to quaternary structure, binding of the ligand triggers homo- and/or heterodimerization of the receptor triggering its autophosphorylation. Post-translationally, phosphorylated. Autophosphorylates.

The protein resides in the cell membrane. Its subcellular location is the endoplasmic reticulum membrane. It is found in the golgi apparatus membrane. The protein localises to the nucleus membrane. It localises to the endosome. The protein resides in the endosome membrane. Its subcellular location is the nucleus. It catalyses the reaction L-tyrosyl-[protein] + ATP = O-phospho-L-tyrosyl-[protein] + ADP + H(+). With respect to regulation, endocytosis and inhibition of the activated EGFR by phosphatases constitute immediate regulatory mechanisms. Moreover, inducible feedback inhibitors may constitute alternative regulatory mechanisms for the EGFR signaling. In terms of biological role, receptor tyrosine kinase binding ligands of the EGF family and activating several signaling cascades to convert extracellular cues into appropriate cellular responses. Known ligands include EGF and TGFA/TGF-alpha. Ligand binding triggers receptor homo- and/or heterodimerization and autophosphorylation on key cytoplasmic residues. The phosphorylated receptor recruits adapter proteins like GRB2 which in turn activates complex downstream signaling cascades. Activates at least 4 major downstream signaling cascades including the RAS-RAF-MEK-ERK, PI3 kinase-AKT, PLCgamma-PKC and STATs modules. May also activate the NF-kappa-B signaling cascade. In Gallus gallus (Chicken), this protein is Epidermal growth factor receptor (EGFR).